Here is a 375-residue protein sequence, read N- to C-terminus: Succinyl-diaminopimelate desuccinylase (375 aa).

H66 contacts Zn(2+). D68 is an active-site residue. D99 contributes to the Zn(2+) binding site. E133 (proton acceptor) is an active-site residue. Zn(2+)-binding residues include E134, E162, and H348.

The protein belongs to the peptidase M20A family. DapE subfamily. In terms of assembly, homodimer. Zn(2+) is required as a cofactor. Requires Co(2+) as cofactor.

It carries out the reaction N-succinyl-(2S,6S)-2,6-diaminopimelate + H2O = (2S,6S)-2,6-diaminopimelate + succinate. The protein operates within amino-acid biosynthesis; L-lysine biosynthesis via DAP pathway; LL-2,6-diaminopimelate from (S)-tetrahydrodipicolinate (succinylase route): step 3/3. Its function is as follows. Catalyzes the hydrolysis of N-succinyl-L,L-diaminopimelic acid (SDAP), forming succinate and LL-2,6-diaminopimelate (DAP), an intermediate involved in the bacterial biosynthesis of lysine and meso-diaminopimelic acid, an essential component of bacterial cell walls. The chain is Succinyl-diaminopimelate desuccinylase from Methylobacillus flagellatus (strain ATCC 51484 / DSM 6875 / VKM B-1610 / KT).